The chain runs to 415 residues: MQSWSETAVPSVPGQGPPLRLFDTADRQVRPVTPGRTATMYVCGITPYDATHLGHAATYLTFDLVNRIWRDAGHDVHYVQNVTDVDDPLFERANRDGEDWVVLGMRETALFREDMEALRVLPPRDYIGAVESIGEVIEMVEKFVASGAAYVVDDPEFPDVYFRANATEQFGYESGYDRETMDKFFAERGGDPDRPGKEDPLDALVWRAVRPGEPSWPSPFGPGRPGWHIECSAIALNRIGSGFDVQGGGSDLIFPHHEYSAAHAESATGDRRFARHYVHTGMIGLDGEKMSKSRGNLVFVSKLRGEGVDPAAIRLGLLSGHYRQDRPWTEQLLADAHTRLQLWKDAAALESAPSATDTIARLRQHLADDLDTPKALDALDGWARRALDHGGSDTNAPSEFAAAVDALLGVRLRRP.

Positions 1–20 are disordered; that stretch reads MQSWSETAVPSVPGQGPPLR. Zn(2+) is bound at residue Cys-43. Residues 43–46, Thr-58, and 81–83 contribute to the L-cysteinyl-5'-AMP site; these read CGIT and NVT. Positions 45 to 55 match the 'HIGH' region motif; that stretch reads ITPYDATHLGH. The 'ERGGDP' region signature appears at 187-192; sequence ERGGDP. An L-cysteinyl-5'-AMP-binding site is contributed by Trp-227. Cys-231 is a Zn(2+) binding site. 249-251 is an L-cysteinyl-5'-AMP binding site; the sequence is GSD. His-256 contributes to the Zn(2+) binding site. Ile-283 contributes to the L-cysteinyl-5'-AMP binding site. The 'KMSKS' region motif lies at 289 to 293; it reads KMSKS.

Belongs to the class-I aminoacyl-tRNA synthetase family. MshC subfamily. As to quaternary structure, monomer. The cofactor is Zn(2+).

It carries out the reaction 1D-myo-inositol 2-amino-2-deoxy-alpha-D-glucopyranoside + L-cysteine + ATP = 1D-myo-inositol 2-(L-cysteinylamino)-2-deoxy-alpha-D-glucopyranoside + AMP + diphosphate + H(+). In terms of biological role, catalyzes the ATP-dependent condensation of GlcN-Ins and L-cysteine to form L-Cys-GlcN-Ins. The protein is L-cysteine:1D-myo-inositol 2-amino-2-deoxy-alpha-D-glucopyranoside ligase of Rhodococcus jostii (strain RHA1).